Here is a 305-residue protein sequence, read N- to C-terminus: N-acetyl-D-glucosamine kinase (305 aa).

Residues 4–11 and 133–140 each bind ATP; these read GFDIGGTK and GFGGGLVF. Residues H157, C178, C180, and C185 each contribute to the Zn(2+) site.

It belongs to the ROK (NagC/XylR) family. NagK subfamily.

The enzyme catalyses N-acetyl-D-glucosamine + ATP = N-acetyl-D-glucosamine 6-phosphate + ADP + H(+). It participates in cell wall biogenesis; peptidoglycan recycling. Catalyzes the phosphorylation of N-acetyl-D-glucosamine (GlcNAc) derived from cell-wall degradation, yielding GlcNAc-6-P. This chain is N-acetyl-D-glucosamine kinase, found in Histophilus somni (strain 129Pt) (Haemophilus somnus).